A 287-amino-acid polypeptide reads, in one-letter code: Aquaporin PIP1-2 (287 aa).

Residues 1–37 form a disordered region; that stretch reads MEGKEEDVRLGANKFTERQPIGTAAQSQDKDYKEPPP. The Cytoplasmic portion of the chain corresponds to 1–55; it reads MEGKEEDVRLGANKFTERQPIGTAAQSQDKDYKEPPPAPLFEPGELSSWSFYRAG. The chain crosses the membrane as a helical span at residues 56 to 76; sequence IAEFVATFLFLYITILTVMGV. Over 77-89 the chain is Extracellular; that stretch reads VKSSTKCSTVGIQ. A helical transmembrane segment spans residues 90–110; it reads GIAWAFGGMIFALVYCTAGIS. Topologically, residues 111-133 are cytoplasmic; that stretch reads GGHINPAVTFGLFLARKLSLTRA. The NPA 1 motif lies at 115–117; that stretch reads NPA. A helical transmembrane segment spans residues 134–154; sequence LFYMVMQCLGAICGAGVVKGF. The Extracellular segment spans residues 155–175; it reads QKGLYENNGGGANVVAPGYTK. The helical transmembrane segment at 176–196 threads the bilayer; sequence GDGLGAEIVGTFILVYTVFSA. Over 197 to 209 the chain is Cytoplasmic; it reads TDAKRSARDSHVP. A helical transmembrane segment spans residues 210–230; the sequence is ILAPLPIGFAVFLVHLATIPI. Residues 231 to 257 lie on the Extracellular side of the membrane; sequence TGTGINPARSLGAAIIYNKGHAWDDHW. An NPA 2 motif is present at residues 236-238; sequence NPA. A helical transmembrane segment spans residues 258 to 278; it reads IFWVGPFIGAALAALYHQVVI. The Cytoplasmic portion of the chain corresponds to 279–287; sequence RAIPFKSRS.

This sequence belongs to the MIP/aquaporin (TC 1.A.8) family. PIP (TC 1.A.8.11) subfamily. In terms of tissue distribution, barely detectable in roots, leaves and fruits.

It is found in the cell membrane. Functionally, water channel required to facilitate the transport of water across cell membrane; mercury-insensitive. Contributes to the tolerance to multiple abiotic stresses including salt (NaCl), cold and water deprivation, by modulating cytosolic K(+)/Na(+) ratio, maintaining osmotic balance, and reducing membrane injury (e.g. oxidative injury). This Musa acuminata subsp. malaccensis (Wild banana) protein is Aquaporin PIP1-2.